A 357-amino-acid polypeptide reads, in one-letter code: MHAPEARLAQVIDRFDQVEARLGAAGDADEIVKLSKEHAELKPVAEKANALKSARAELAELAEMMEGDDAEMAEMAREEFYALKERLPELEHAMSLMLLPKDKDDSANAMIEIRAGTGGDEAAIFAGNLYGMYQRYAQLQGWSWELVSASEGEHGGYKEVVAAISGNGVFGRLKFESGVHRVQRVPATESQGRIHTSAATVAIMPQPEDIDIELDMGDVRVDTMRASGAGGQHVNKTDSAVRMTHIPTGLVVVCQEKSQHQNRARAQEILKAKLYDMQREAANAERAAERKGQIGSGDRSERIRTYNYPQGRVSDHRINLTLYKLDDIVAGDGLDEVVAALIAEDQAARLAALEDDA.

Glutamine 232 carries the N5-methylglutamine modification. Basic and acidic residues predominate over residues 284 to 304 (AERAAERKGQIGSGDRSERIR). Residues 284-308 (AERAAERKGQIGSGDRSERIRTYNY) form a disordered region.

The protein belongs to the prokaryotic/mitochondrial release factor family. Post-translationally, methylated by PrmC. Methylation increases the termination efficiency of RF1.

The protein localises to the cytoplasm. Functionally, peptide chain release factor 1 directs the termination of translation in response to the peptide chain termination codons UAG and UAA. This Maricaulis maris (strain MCS10) (Caulobacter maris) protein is Peptide chain release factor 1.